Consider the following 352-residue polypeptide: Phenylalanine--tRNA ligase alpha subunit (352 aa).

E258 contacts Mg(2+).

This sequence belongs to the class-II aminoacyl-tRNA synthetase family. Phe-tRNA synthetase alpha subunit type 1 subfamily. As to quaternary structure, tetramer of two alpha and two beta subunits. It depends on Mg(2+) as a cofactor.

The protein resides in the cytoplasm. The enzyme catalyses tRNA(Phe) + L-phenylalanine + ATP = L-phenylalanyl-tRNA(Phe) + AMP + diphosphate + H(+). This is Phenylalanine--tRNA ligase alpha subunit from Staphylococcus epidermidis (strain ATCC 35984 / DSM 28319 / BCRC 17069 / CCUG 31568 / BM 3577 / RP62A).